Consider the following 706-residue polypeptide: Forkhead box protein P2 (706 aa).

Polar residues predominate over residues 1 to 28 (MMQESATETISNSSMNQNGMSTLSSQLD). 2 disordered regions span residues 1–45 (MMQE…SEVS) and 275–305 (IKHGGLDLTTNISSSTTSTTTSKASPPITHH). Residues 287-296 (SSSTTSTTTS) are compositionally biased toward low complexity. A C2H2-type zinc finger spans residues 337 to 362 (GVCKWPGCENICEDFGQFLKHLNNEH). Positions 379–400 (VQQLEIQLSKERERLQAMMTHL) are leucine-zipper. The segment at 413 to 417 (PLNLV) is ctbp1-binding. The fork-head DNA-binding region spans 495 to 585 (RPPFTYATLI…SQKITASPTL (91 aa)). Positions 672-706 (DDEDCPMSLVTTANHSPELEEDRELEEEPLSEDLE) are disordered. The segment covering 690–706 (LEEDRELEEEPLSEDLE) has biased composition (acidic residues).

Dimerization is required for DNA-binding. As to expression, at stage 15, expressed in the anterior/superior eye field and the caudal branchial arch. At later stages, expression persists in the retina and in the caudal branchial arch. Expressed in the pronephros and the tip of the tail. Beginning with stage 35, expression in the brain is localized to distinct subdomains of the anterior prosencephalon, the medial mesencephalon and to lateral domains of the hindbrain.

Its subcellular location is the nucleus. In terms of biological role, transcriptional repressor. This is Forkhead box protein P2 from Xenopus laevis (African clawed frog).